Consider the following 330-residue polypeptide: tRNA U34 carboxymethyltransferase (330 aa).

Residues lysine 91, tryptophan 105, lysine 110, glycine 130, 152 to 154 (DPS), 181 to 182 (IE), methionine 196, tyrosine 200, and arginine 315 each bind carboxy-S-adenosyl-L-methionine.

This sequence belongs to the class I-like SAM-binding methyltransferase superfamily. CmoB family. Homotetramer.

It catalyses the reaction carboxy-S-adenosyl-L-methionine + 5-hydroxyuridine(34) in tRNA = 5-carboxymethoxyuridine(34) in tRNA + S-adenosyl-L-homocysteine + H(+). Catalyzes carboxymethyl transfer from carboxy-S-adenosyl-L-methionine (Cx-SAM) to 5-hydroxyuridine (ho5U) to form 5-carboxymethoxyuridine (cmo5U) at position 34 in tRNAs. This Shewanella piezotolerans (strain WP3 / JCM 13877) protein is tRNA U34 carboxymethyltransferase.